Reading from the N-terminus, the 74-residue chain is MKEGIHPEYHEITVTCSCGNEFKTRSVLSKPLHIEVCSSCHPFYTGKQKIVDTAGRVEKFNQKYGRHLQKQAQT.

4 residues coordinate Zn(2+): cysteine 16, cysteine 18, cysteine 37, and cysteine 40.

This sequence belongs to the bacterial ribosomal protein bL31 family. Type A subfamily. In terms of assembly, part of the 50S ribosomal subunit. It depends on Zn(2+) as a cofactor.

In terms of biological role, binds the 23S rRNA. This chain is Large ribosomal subunit protein bL31, found in Nitrosomonas europaea (strain ATCC 19718 / CIP 103999 / KCTC 2705 / NBRC 14298).